A 105-amino-acid polypeptide reads, in one-letter code: Translation initiation factor 1A (105 aa).

The S1-like domain maps to T12–T87.

It belongs to the eIF-1A family.

Functionally, seems to be required for maximal rate of protein biosynthesis. Enhances ribosome dissociation into subunits and stabilizes the binding of the initiator Met-tRNA(I) to 40 S ribosomal subunits. The polypeptide is Translation initiation factor 1A (eIF1A) (Methanococcus aeolicus (strain ATCC BAA-1280 / DSM 17508 / OCM 812 / Nankai-3)).